A 129-amino-acid polypeptide reads, in one-letter code: Small ribosomal subunit protein uS12 (129 aa).

The segment at 110-129 (RKQGRSRYGAHRKQVAATKK) is disordered.

Belongs to the universal ribosomal protein uS12 family. In terms of assembly, part of the 30S ribosomal subunit. Contacts proteins S8 and S17. May interact with IF1 in the 30S initiation complex.

With S4 and S5 plays an important role in translational accuracy. In terms of biological role, interacts with and stabilizes bases of the 16S rRNA that are involved in tRNA selection in the A site and with the mRNA backbone. Located at the interface of the 30S and 50S subunits, it traverses the body of the 30S subunit contacting proteins on the other side and probably holding the rRNA structure together. The combined cluster of proteins S8, S12 and S17 appears to hold together the shoulder and platform of the 30S subunit. The sequence is that of Small ribosomal subunit protein uS12 from Rickettsia prowazekii (strain Madrid E).